The primary structure comprises 432 residues: MSTFDLTQRMAPFLDLHLIIPLLEFIEPRGIYDEKSLTEMHRQLLTKTNMIDSVIETYNGKPIPAAIEAKKKQIIKERDELKSKVDSVVAILEIPEVKEMMDNNRERDGNVRILEHLTQNHNFTVDMVDTLFKYSKFMYECGNYTVASVCLYYYRNLVNQADPNYLNALYGKLASEILLQEWEHARDDLLKLRAYIDANPFDTEWELVTQRAWLMHWALFVYYNYPKGRDEIIEMFLNQQPYLNAIQVLAPHLLRYLAVAVVTSKSRQKNSLKDLVKVIDIERHSYKDPVTDFLTCLYIKYDFDEAQEMLQKCEEVLSNDFFLTAVLGDFRESARLLIFEMFCRIHQCITIEMLARRLNMSQEEAERWIVDLIRTYRIEGAKIDSKLGQVVMGVKSVSIHEQVMENTKRLTLRAQQIALQLEKGRQDKVKAT.

In terms of domain architecture, PCI spans 221 to 401; sequence VYYNYPKGRD…MGVKSVSIHE (181 aa).

The protein belongs to the eIF-3 subunit E family. As to quaternary structure, component of the eukaryotic translation initiation factor 3 (eIF-3) complex.

It localises to the cytoplasm. In terms of biological role, component of the eukaryotic translation initiation factor 3 (eIF-3) complex, which is involved in protein synthesis of a specialized repertoire of mRNAs and, together with other initiation factors, stimulates binding of mRNA and methionyl-tRNAi to the 40S ribosome. The eIF-3 complex specifically targets and initiates translation of a subset of mRNAs involved in cell proliferation. In Caenorhabditis elegans, this protein is Eukaryotic translation initiation factor 3 subunit E.